A 354-amino-acid polypeptide reads, in one-letter code: Rhodopsin (354 aa).

Topologically, residues 1-36 are extracellular; it reads MNGTEGPYFYVPMVNTTGIVRSPYEYPQYYLVSPAA. N-linked (GlcNAc...) asparagine glycans are attached at residues Asn2 and Asn15. A helical membrane pass occupies residues 37 to 61; the sequence is YACLGAYMFFLILVGFPVNFLTLYV. Over 62–73 the chain is Cytoplasmic; that stretch reads TIEHKKLRTPLN. The chain crosses the membrane as a helical span at residues 74–96; that stretch reads YILLNLAVADLFMVFGGFTTTIY. The Extracellular portion of the chain corresponds to 97–110; it reads TSMHGYFVLGRLGC. A disulfide bridge links Cys110 with Cys187. A helical membrane pass occupies residues 111 to 133; the sequence is NLEGYFATLGGEIGLWSLVVLAV. The 'Ionic lock' involved in activated form stabilization signature appears at 134-136; that stretch reads ERW. The Cytoplasmic segment spans residues 134 to 152; that stretch reads ERWLVVCKPISNFRFTENH. A helical transmembrane segment spans residues 153 to 173; it reads AIMGLVFTWIMANACAAPPLL. The Extracellular segment spans residues 174 to 202; it reads GWSRYIPEGMQCSCGVDYYTRAEGFNNES. The chain crosses the membrane as a helical span at residues 203–224; it reads FVIYMFICHFCIPLVVVFFCYG. Residues 225 to 252 are Cytoplasmic-facing; sequence RLLCAVKEAAAAQQESETTQRAEREVTR. A helical membrane pass occupies residues 253-274; that stretch reads MVVILVIGFLVCWTPYASVAWY. Residues 275–286 lie on the Extracellular side of the membrane; the sequence is IFSNQGSEFGPL. Residues 287–308 traverse the membrane as a helical segment; the sequence is FMTIPAFFAKSSSIYNPMIYIC. Lys296 carries the post-translational modification N6-(retinylidene)lysine. Topologically, residues 309–354 are cytoplasmic; it reads MNKQFRHCMITTLCCGKNPFEEEEGASTTASKTEASSVSSSSVSPA. S-palmitoyl cysteine attachment occurs at residues Cys322 and Cys323. The tract at residues 333 to 354 is disordered; sequence GASTTASKTEASSVSSSSVSPA. A compositionally biased stretch (low complexity) spans 334 to 354; the sequence is ASTTASKTEASSVSSSSVSPA.

Belongs to the G-protein coupled receptor 1 family. Opsin subfamily. Post-translationally, phosphorylated on some or all of the serine and threonine residues present in the C-terminal region. Contains one covalently linked retinal chromophore.

It is found in the membrane. The protein resides in the cell projection. It localises to the cilium. Its subcellular location is the photoreceptor outer segment. Its function is as follows. Photoreceptor required for image-forming vision at low light intensity. While most salt water fish species use retinal as chromophore, most freshwater fish use 3-dehydroretinal, or a mixture of retinal and 3-dehydroretinal. Light-induced isomerization of 11-cis to all-trans retinal triggers a conformational change that activates signaling via G-proteins. Subsequent receptor phosphorylation mediates displacement of the bound G-protein alpha subunit by arrestin and terminates signaling. The protein is Rhodopsin (rho) of Gambusia affinis (Western mosquitofish).